A 963-amino-acid chain; its full sequence is Transcription factor cbf12 (963 aa).

Disordered regions lie at residues 130–207 and 248–289; these read NPSN…SQGL and VNMN…PPQK. Composition is skewed to polar residues over residues 143-207 and 249-289; these read FENN…SQGL and NMNS…PPQK.

It belongs to the Su(H) family.

It localises to the nucleus. In terms of biological role, transcription factor which function may be to trigger the increase of adhesion at stationary phase, possibly by counteracting or replacing cbf11 at the respective promoters. May also play a cbf11-antagonistic role in the regulation of a number of other important processes such as extracellular material production, colony morphogenesis, ploidy maintenance, or meiosis. The polypeptide is Transcription factor cbf12 (cbf12) (Schizosaccharomyces pombe (strain 972 / ATCC 24843) (Fission yeast)).